A 488-amino-acid polypeptide reads, in one-letter code: Glutamyl-tRNA(Gln) amidotransferase subunit A (488 aa).

Active-site charge relay system residues include Lys-78 and Ser-153. Ser-177 serves as the catalytic Acyl-ester intermediate.

It belongs to the amidase family. GatA subfamily. Heterotrimer of A, B and C subunits.

It catalyses the reaction L-glutamyl-tRNA(Gln) + L-glutamine + ATP + H2O = L-glutaminyl-tRNA(Gln) + L-glutamate + ADP + phosphate + H(+). In terms of biological role, allows the formation of correctly charged Gln-tRNA(Gln) through the transamidation of misacylated Glu-tRNA(Gln) in organisms which lack glutaminyl-tRNA synthetase. The reaction takes place in the presence of glutamine and ATP through an activated gamma-phospho-Glu-tRNA(Gln). The chain is Glutamyl-tRNA(Gln) amidotransferase subunit A from Solidesulfovibrio magneticus (strain ATCC 700980 / DSM 13731 / RS-1) (Desulfovibrio magneticus).